We begin with the raw amino-acid sequence, 366 residues long: Sulfite reductase, dissimilatory-type subunit beta (366 aa).

Cysteine 140, cysteine 177, cysteine 178, cysteine 182, cysteine 220, cysteine 241, cysteine 244, and cysteine 247 together coordinate [4Fe-4S] cluster. A siroheme-binding site is contributed by cysteine 182. Residues 232-262 enclose the 4Fe-4S ferredoxin-type domain; that stretch reads KTIKVDVEKCMYCGNCYTMCPGMPLFDPEND.

In terms of assembly, heterotetramer of two alpha and two beta subunits. Requires [4Fe-4S] cluster as cofactor. Siroheme is required as a cofactor.

It localises to the membrane. It carries out the reaction [DsrC protein]-trisulfide + NAD(+) + 3 H2O = [DsrC protein]-dithiol + sulfite + NADH + 3 H(+). In terms of biological role, catalyzes the reduction of sulfite to sulfide. This is the terminal oxidation reaction in sulfate respiration. In Archaeoglobus fulgidus (strain ATCC 49558 / DSM 4304 / JCM 9628 / NBRC 100126 / VC-16), this protein is Sulfite reductase, dissimilatory-type subunit beta (dsrB).